The primary structure comprises 398 residues: Acetate kinase (398 aa).

A Mg(2+)-binding site is contributed by Asn8. Lys15 contributes to the ATP binding site. Arg90 serves as a coordination point for substrate. The Proton donor/acceptor role is filled by Asp147. Residues 207-211 (HIGAG), 282-284 (DMR), and 330-334 (GVGEN) contribute to the ATP site. Glu383 serves as a coordination point for Mg(2+).

The protein belongs to the acetokinase family. Homodimer. The cofactor is Mg(2+). It depends on Mn(2+) as a cofactor.

The protein resides in the cytoplasm. The enzyme catalyses acetate + ATP = acetyl phosphate + ADP. It functions in the pathway metabolic intermediate biosynthesis; acetyl-CoA biosynthesis; acetyl-CoA from acetate: step 1/2. Functionally, catalyzes the formation of acetyl phosphate from acetate and ATP. Can also catalyze the reverse reaction. The protein is Acetate kinase of Limosilactobacillus fermentum (strain NBRC 3956 / LMG 18251) (Lactobacillus fermentum).